Consider the following 273-residue polypeptide: 2,3,4,5-tetrahydropyridine-2,6-dicarboxylate N-succinyltransferase (273 aa).

This sequence belongs to the transferase hexapeptide repeat family.

It localises to the cytoplasm. It catalyses the reaction (S)-2,3,4,5-tetrahydrodipicolinate + succinyl-CoA + H2O = (S)-2-succinylamino-6-oxoheptanedioate + CoA. Its pathway is amino-acid biosynthesis; L-lysine biosynthesis via DAP pathway; LL-2,6-diaminopimelate from (S)-tetrahydrodipicolinate (succinylase route): step 1/3. The protein is 2,3,4,5-tetrahydropyridine-2,6-dicarboxylate N-succinyltransferase of Acinetobacter baumannii (strain SDF).